The sequence spans 659 residues: Crossover junction endonuclease MUS81 (659 aa).

The short motif at 59–78 is the Helix-hairpin-helix motif 1 element; it reads KDLSQIKGFGKWMVKLMKGY. The 100-residue stretch at 404–503 folds into the ERCC4 domain; sequence ILILDDREKF…KKLIYILEGD (100 aa). The short motif at 585–622 is the Helix-hairpin-helix motif 2 element; it reads TISDVFAIQLMQVPQVTEEIAIAVLDMYPTLLSLASAY.

Belongs to the XPF family. As to quaternary structure, forms a heterodimer with EME1A or EME1B. Mg(2+) is required as a cofactor. It depends on Ca(2+) as a cofactor. Ubiquitous but preferentially expressed in young flowers buds, notably in anthers.

It localises to the nucleus. It is found in the nucleolus. Its function is as follows. Interacts with EME1 to form a DNA structure-specific endonuclease with substrate preference for branched DNA structures with a 5'-end at the branch nick. Typical substrates include 3'-flap structures, D-loops, replication forks, nicked Holliday junctions and also intact Holliday junctions with a reduced efficiency. May be required in mitosis for the processing of stalled or collapsed replication fork intermediates. Plays a role in DNA repair and in genotoxic stress-induced homologous recombination (HR) in somatic cells. Mediates a subset of meiotic recombination events that are insensitive to crossover interference. Together with SEND1, essential for the resolution of toxic replication structures to ensure genome stability, and to maintain telomere integrity and replication. This chain is Crossover junction endonuclease MUS81, found in Arabidopsis thaliana (Mouse-ear cress).